The following is a 519-amino-acid chain: GATA zinc finger domain-containing protein 8 (519 aa).

Disordered stretches follow at residues 25-182 (YSTG…SSSG), 198-249 (SNIN…SNNT), 273-359 (SNNM…NNKQ), and 431-453 (DERQ…KRRE). Residues 37–156 (TNNSQNKTNN…SSSITSPSSN (120 aa)) show a composition bias toward low complexity. The span at 172 to 182 (SPNNKQVSSSG) shows a compositional bias: polar residues. Residues 273 to 357 (SNNMNINNQH…SNINNNNNNN (85 aa)) show a composition bias toward low complexity. The stretch at 429–461 (KTDERQQKKRMESDKNAEKREKRREASRLLNNV) forms a coiled coil. A GATA-type zinc finger spans residues 462–487 (CRNCKTTETPEWRKGPDGTKSLCNAC).

This is GATA zinc finger domain-containing protein 8 (gtaH) from Dictyostelium discoideum (Social amoeba).